A 361-amino-acid chain; its full sequence is Eukaryotic translation initiation factor 3 subunit F (361 aa).

2 stretches are compositionally biased toward low complexity: residues 1-11 and 21-42; these read MATPVVSASGP and AAPA…AAAV. The disordered stretch occupies residues 1-42; the sequence is MATPVVSASGPPATPAPAPVAAPASASASVPAPTPAPAAAAV. Alanine 2 carries the N-acetylalanine modification. Serine 50 bears the Phosphoserine; by CDK11; in vitro mark. A compositionally biased stretch (low complexity) spans 55-78; the sequence is AAAATTAAPGQTPASAQAPAQTPA. The tract at residues 55–86 is disordered; the sequence is AAAATTAAPGQTPASAQAPAQTPAPALPGPAL. The MPN domain occupies 96–226; that stretch reads VRLHPVILAS…IKAYVSTLMG (131 aa). The residue at position 242 (lysine 242) is an N6-acetyllysine. Phosphoserine is present on serine 262.

Belongs to the eIF-3 subunit F family. In terms of assembly, component of the eukaryotic translation initiation factor 3 (eIF-3) complex, which is composed of 13 subunits: EIF3A, EIF3B, EIF3C, EIF3D, EIF3E, EIF3F, EIF3G, EIF3H, EIF3I, EIF3J, EIF3K, EIF3L and EIF3M. The eIF-3 complex appears to include 3 stable modules: module A is composed of EIF3A, EIF3B, EIF3G and EIF3I; module B is composed of EIF3F, EIF3H, and EIF3M; and module C is composed of EIF3C, EIF3D, EIF3E, EIF3K and EIF3L. EIF3C of module C binds EIF3B of module A and EIF3H of module B, thereby linking the three modules. EIF3J is a labile subunit that binds to the eIF-3 complex via EIF3B. The eIF-3 complex interacts with RPS6KB1 under conditions of nutrient depletion. Mitogenic stimulation leads to binding and activation of a complex composed of MTOR and RPTOR, leading to phosphorylation and release of RPS6KB1 and binding of EIF4B to eIF-3. Interacts with RNF139; the interaction leads to protein translation inhibitions in a ubiquitination-dependent manner. Interacts with DTX1, the interaction is required for deubiquitinating activity towards NOTCH1. Phosphorylation is enhanced upon serum stimulation. Phosphorylated during apoptosis by caspase-processed CDK11.

It is found in the cytoplasm. It carries out the reaction Thiol-dependent hydrolysis of ester, thioester, amide, peptide and isopeptide bonds formed by the C-terminal Gly of ubiquitin (a 76-residue protein attached to proteins as an intracellular targeting signal).. Component of the eukaryotic translation initiation factor 3 (eIF-3) complex, which is required for several steps in the initiation of protein synthesis. The eIF-3 complex associates with the 40S ribosome and facilitates the recruitment of eIF-1, eIF-1A, eIF-2:GTP:methionyl-tRNAi and eIF-5 to form the 43S pre-initiation complex (43S PIC). The eIF-3 complex stimulates mRNA recruitment to the 43S PIC and scanning of the mRNA for AUG recognition. The eIF-3 complex is also required for disassembly and recycling of post-termination ribosomal complexes and subsequently prevents premature joining of the 40S and 60S ribosomal subunits prior to initiation. The eIF-3 complex specifically targets and initiates translation of a subset of mRNAs involved in cell proliferation, including cell cycling, differentiation and apoptosis, and uses different modes of RNA stem-loop binding to exert either translational activation or repression. Its function is as follows. Deubiquitinates activated NOTCH1, promoting its nuclear import, thereby acting as a positive regulator of Notch signaling. This is Eukaryotic translation initiation factor 3 subunit F from Macaca fascicularis (Crab-eating macaque).